The chain runs to 316 residues: Ribosomal RNA small subunit methyltransferase H (316 aa).

S-adenosyl-L-methionine-binding positions include 42–44 (GGH), Asp62, Phe86, Asp104, and Gln111.

It belongs to the methyltransferase superfamily. RsmH family.

The protein resides in the cytoplasm. The enzyme catalyses cytidine(1402) in 16S rRNA + S-adenosyl-L-methionine = N(4)-methylcytidine(1402) in 16S rRNA + S-adenosyl-L-homocysteine + H(+). In terms of biological role, specifically methylates the N4 position of cytidine in position 1402 (C1402) of 16S rRNA. The polypeptide is Ribosomal RNA small subunit methyltransferase H (Polynucleobacter necessarius subsp. necessarius (strain STIR1)).